The primary structure comprises 331 residues: D/L-glyceraldehyde reductase (331 aa).

Catalysis depends on Tyr-51, which acts as the Proton donor. His-114 serves as a coordination point for substrate. 213-276 (SAFGNNTKGL…SVTKARIAEN (64 aa)) is a binding site for NADP(+).

Belongs to the aldo/keto reductase family.

The catalysed reaction is glycerol + NADP(+) = L-glyceraldehyde + NADPH + H(+). The enzyme catalyses glycerol + NADP(+) = D-glyceraldehyde + NADPH + H(+). It functions in the pathway carbohydrate acid metabolism. Functionally, mediates the conversion of L-glyceraldehyde to glycerol in D-galacturonate catabolic process. Also able to reduce D-glyceraldehyde. The polypeptide is D/L-glyceraldehyde reductase (gld1) (Hypocrea jecorina (Trichoderma reesei)).